The sequence spans 431 residues: Isocitrate lyase (431 aa).

The disordered stretch occupies residues 1–21 (MSNVGTPRTAQEIQQDWDTNP). 93 to 95 (SGW) is a binding site for substrate. Aspartate 155 provides a ligand contact to Mg(2+). Cysteine 193 serves as the catalytic Proton acceptor. Substrate contacts are provided by residues 194–195 (GH), arginine 230, 315–319 (NCSPS), and threonine 349.

This sequence belongs to the isocitrate lyase/PEP mutase superfamily. Isocitrate lyase family. As to quaternary structure, homotetramer. The cofactor is Mg(2+).

The catalysed reaction is D-threo-isocitrate = glyoxylate + succinate. The protein operates within carbohydrate metabolism; glyoxylate cycle; (S)-malate from isocitrate: step 1/2. In terms of biological role, involved in the metabolic adaptation in response to environmental changes. Catalyzes the reversible formation of succinate and glyoxylate from isocitrate, a key step of the glyoxylate cycle, which operates as an anaplerotic route for replenishing the tricarboxylic acid cycle during growth on fatty acid substrates. In Corynebacterium efficiens (strain DSM 44549 / YS-314 / AJ 12310 / JCM 11189 / NBRC 100395), this protein is Isocitrate lyase (aceA).